A 625-amino-acid polypeptide reads, in one-letter code: MARKSHMYNAIPAGFESDEENMENLMSNLKIKRLEDITTGAGIDGCNFDATLDAKAEEFFKLFREKWNMYSKKKSPHLRQEFGRALMGHQDPLLLALKIFANCPDSSNIKTKSLSHFVLDTVCKLHKDFPHLGEGCDPNTSMIAFNFVKTSGLLALNNAVIHAYSLRQIRDLLLPKLRELLDNGLYKEVTQWSISLQLTHEFDMLELAFPLIAIEKLPLAEEYLDHATQQRLPFVKFLDSLLHKEKSVLELCEHLLDRYKNLKISHNVLSYRPMAKIVARLAKKYGFDDAVTPNYKFTKTCSYLHYLYREYEKTRMNLASFREVVSVHAFNHELRTDFVKYLASAGAHSEAIYWYTEFNIDPKDCPLEIETQVSQNGAGKASGWESPGKERCPSSRCDMYLTMDLPDECLIIVNKADEFDRMLYHLQQECVIYLDSEWMQSVCGDNQLCVLQIATGHNVYLIDCLARESLRSEHWRLLGANIFNNVNIRKVGFSMVSDLSVLQRSLPLQLRLQMPHHYLDLRNLWLELKKQRFGVELPFGNVNRAGDALTDLSLACLGKKLNKSNQCSNWANRPLRREQILYAAIDARCLMLIYNTLIERVSFIQAVIEKSIASNNFLRRGAHVK.

Phosphoserine is present on Ser17. Positions 410–602 (LIIVNKADEF…IYNTLIERVS (193 aa)) constitute a 3'-5' exonuclease domain.

It belongs to the mut-7 family. As to quaternary structure, interacts with AGO1; the interaction is not RNA dependent. Mg(2+) is required as a cofactor.

In terms of biological role, possesses 3'-5' exoribonuclease activity. Required for 3'-end trimming of AGO1-bound miRNAs, in particular multiple-isoform miRNAs, which represents a critical step in miRNA maturation. In Drosophila melanogaster (Fruit fly), this protein is Exonuclease mut-7 homolog (Nbr).